A 1738-amino-acid chain; its full sequence is Sodium leak channel NALCN (1738 aa).

At 1–36 the chain is on the cytoplasmic side; it reads MLKRKQSSRVEAQPVTDFGPDESLSDNADILWINKP. A helical transmembrane segment spans residues 37 to 57; that stretch reads WVHSLLRICAIISVISVCMNT. Topologically, residues 58-65 are extracellular; the sequence is PMTFEHYP. Residues 66-90 traverse the membrane as a helical segment; the sequence is PLQYVTFTLDTLLMFLYTAEMIAKM. Topologically, residues 91 to 106 are cytoplasmic; it reads HIRGIVKGDSSYVKDR. A helical membrane pass occupies residues 107–129; sequence WCVFDGFMVFCLWVSLVLQVFEI. Over 130–137 the chain is Extracellular; the sequence is ADIVDQMS. The helical; Voltage-sensor transmembrane segment at 138 to 158 threads the bilayer; sequence PWGMLRIPRPLIMIRAFRIYF. Over 159-173 the chain is Cytoplasmic; the sequence is RFELPRTRITNILKR. Residues 174–199 form a helical membrane-spanning segment; sequence SGEQIWSVSIFLLFFLLLYGILGVQM. Over 200 to 269 the chain is Extracellular; the sequence is FGTFTYHCVV…YSGFNEIGTS (70 aa). 2 disulfides stabilise this stretch: C207–C239 and C229–C245. 2 N-linked (GlcNAc...) asparagine glycosylation sites follow: N210 and N216. An intramembrane region (pore-forming) is located at residues 270-289; the sequence is IFTVYEAASQEGWVFLMYRA. The Extracellular segment spans residues 290–294; it reads IDSFP. Residues 295–322 form a helical membrane-spanning segment; the sequence is RWRSYFYFITLIFFLAWLVKNVFIAVII. Residues 323 to 382 are Cytoplasmic-facing; sequence ETFAEIRVQFQQMWGSRSSTTSTATTQMFHEDAAGGWQLVAVDVNKPQGRAPACLQKMMR. The helical transmembrane segment at 383–403 threads the bilayer; that stretch reads SSVFHMFILSMVTVDVIVAAS. The Extracellular portion of the chain corresponds to 404–416; the sequence is NYYKGENFRRQYD. Residues 417–439 form a helical membrane-spanning segment; it reads EFYLAEVAFTVLFDLEALLKIWC. At 440–447 the chain is on the cytoplasmic side; that stretch reads LGFTGYIS. A helical transmembrane segment spans residues 448–468; that stretch reads SSLHKFELLLVIGTTLHVYPD. Over 469–472 the chain is Extracellular; sequence LYHS. A helical; Voltage-sensor membrane pass occupies residues 473–492; the sequence is QFTYFQVLRVVRLIKISPAL. The Cytoplasmic portion of the chain corresponds to 493–502; the sequence is EDFVYKIFGP. The chain crosses the membrane as a helical span at residues 503–530; the sequence is GKKLGSLVVFTASLLIVMSAISLQMFCF. Residues 531 to 543 lie on the Extracellular side of the membrane; it reads VEELDRFTTFPRA. The pore-forming intramembrane region spans 544–563; it reads FMSMFQILTQEGWVDVMDQT. At 564-569 the chain is on the extracellular side; the sequence is LNAVGH. The helical transmembrane segment at 570–599 threads the bilayer; it reads MWAPVVAIYFILYHLFATLILLSLFVAVIL. The Cytoplasmic portion of the chain corresponds to 600–886; it reads DNLELDEDLK…QLYDLLGLVT (287 aa). The segment at 762-785 is disordered; that stretch reads QERRSLRHGSNSQRISRGKSLETL. The stretch at 795–830 forms a coiled coil; sequence YRNAQREDSEIKMIQEKKEQAEMKRKVQEEELRENH. A helical membrane pass occupies residues 887–906; sequence YLDWVMIIVTICSCISMMFE. Residues 907–915 lie on the Extracellular side of the membrane; that stretch reads SPFRRVMHA. Residues 916–939 form a helical membrane-spanning segment; it reads PTLQIAEYVFVIFMSIELNLKIMA. Residues 940–947 lie on the Cytoplasmic side of the membrane; that stretch reads DGLFFTPT. A helical transmembrane segment spans residues 948–972; the sequence is AVIRDFGGVMDIFIYLVSLIFLCWM. Topologically, residues 973–980 are extracellular; that stretch reads PQNVPAES. The chain crosses the membrane as a helical; Voltage-sensor span at residues 981–1003; the sequence is GAQLLMVLRCLRPLRIFKLVPQM. Residues 1004 to 1015 lie on the Cytoplasmic side of the membrane; it reads RKVVRELFSGFK. A helical transmembrane segment spans residues 1016 to 1039; that stretch reads EIFLVSILLLTLMLVFASFGVQLF. Topologically, residues 1040–1104 are extracellular; that stretch reads AGKLAKCNDP…NFNFDNVGNA (65 aa). C1046 and C1057 are disulfide-bonded. N1064 is a glycosylation site (N-linked (GlcNAc...) asparagine). Residues 1105–1124 constitute an intramembrane region (pore-forming); that stretch reads MLALFEVLSLKGWVEVRDVI. Residues 1125 to 1129 are Extracellular-facing; that stretch reads IHRVG. A helical membrane pass occupies residues 1130-1159; sequence PIHGIYIHVFVFLGCMIGLTLFVGVVIANF. The Cytoplasmic segment spans residues 1160–1210; that stretch reads NENKGTALLTVDQRRWEDLKSRLKIAQPLHLPPRPDNDGFRAKMYDITQHP. Residues 1211-1227 form a helical membrane-spanning segment; it reads FFKRTIALLVLAQSVLL. Residues 1228-1236 are Extracellular-facing; it reads SVKWDVEDP. A helical membrane pass occupies residues 1237 to 1260; it reads VTVPLATMSVVFTFIFVLEVTMKI. The Cytoplasmic portion of the chain corresponds to 1261 to 1271; sequence IAMSPAGFWQS. A helical transmembrane segment spans residues 1272–1293; that stretch reads RRNRYDLLVTSLGVVWVVLHFA. Residues 1294–1296 are Extracellular-facing; it reads LLN. Residues 1297-1318 form a helical; Voltage-sensor membrane-spanning segment; sequence AYTYMMGACVIVFRFFSICGKH. Over 1319 to 1331 the chain is Cytoplasmic; it reads VTLKMLLLTVVVS. Residues 1332-1357 traverse the membrane as a helical segment; sequence MYKSFFIIVGMFLLLLCYAFAGVVLF. Residues 1358-1378 lie on the Extracellular side of the membrane; that stretch reads GTVKYGENINRHANFSSAGKA. Positions 1379-1398 form an intramembrane region, pore-forming; sequence ITVLFRIVTGEDWNKIMHDC. Topologically, residues 1399 to 1420 are extracellular; sequence MVQPPFCTPDEFTYWATDCGNY. An intrachain disulfide couples C1405 to C1417. A helical transmembrane segment spans residues 1421-1447; it reads AGALMYFCSFYVIIAYIMLNLLVAIIV. The Cytoplasmic portion of the chain corresponds to 1448-1738; the sequence is ENFSLFYSTE…DESGDDLLDI (291 aa). The interval 1611 to 1678 is disordered; sequence PPSIETTQPS…QWRLPSAPKP (68 aa). The segment covering 1613–1632 has biased composition (polar residues); sequence SIETTQPSEDTNANSQDNSM. A compositionally biased stretch (low complexity) spans 1633–1648; sequence QPETSSQQQLLSPTLS.

This sequence belongs to the NALCN family. In terms of assembly, found in a complex with NALCN, UNC79, UNC80 and NACL1; these auxiliary subunits are indispensable for the function of NALCN channel. Interacts with UNC80; required for the NALCN activation/inhibition by GPCRs in neurons. Found in a complex with NALCN, UNC79 and UNC80; UNC80 bridges NALCN to UNC79. Interacts with CHRM3. In terms of processing, phosphorylated on tyrosine residues.

The protein localises to the cell membrane. The catalysed reaction is Na(+)(in) = Na(+)(out). With respect to regulation, inhibited by low micromolar concentrations of Gd(3+) and high micromolar concentrations of verapamil. Insensitive to tetrodotoxin (TTX) and potentiated by low external Ca(2+) concentration. Voltage-gated ion channel responsible for the resting Na(+) permeability that controls neuronal excitability. NALCN channel functions as a multi-protein complex, which consists at least of NALCN, NALF1, UNC79 and UNC80. NALCN is the voltage-sensing, pore-forming subunit of the NALCN channel complex. NALCN channel complex is constitutively active and conducts monovalent cations but is blocked by physiological concentrations of extracellular divalent cations. In addition to its role in regulating neuronal excitability, is required for normal respiratory rhythm, systemic osmoregulation by controlling the serum sodium concentration and in the regulation of the intestinal pace-making activity in the interstitial cells of Cajal. NALCN channel is also activated by neuropeptides such as neurotensin and substance P (SP) through a SRC family kinases-dependent pathway. In addition, NALCN activity is enhanced/modulated by several GPCRs, such as CHRM3. This Homo sapiens (Human) protein is Sodium leak channel NALCN.